The following is a 493-amino-acid chain: Glutamate--tRNA ligase (493 aa).

Residues Pro9–Thr19 carry the 'HIGH' region motif. Residues Lys249–Arg253 carry the 'KMSKS' region motif. Lys252 provides a ligand contact to ATP.

The protein belongs to the class-I aminoacyl-tRNA synthetase family. Glutamate--tRNA ligase type 1 subfamily. As to quaternary structure, monomer.

It localises to the cytoplasm. It carries out the reaction tRNA(Glu) + L-glutamate + ATP = L-glutamyl-tRNA(Glu) + AMP + diphosphate. Catalyzes the attachment of glutamate to tRNA(Glu) in a two-step reaction: glutamate is first activated by ATP to form Glu-AMP and then transferred to the acceptor end of tRNA(Glu). The chain is Glutamate--tRNA ligase from Marinobacter nauticus (strain ATCC 700491 / DSM 11845 / VT8) (Marinobacter aquaeolei).